The following is a 239-amino-acid chain: Uridylate kinase (239 aa).

13 to 16 contacts ATP; that stretch reads KLSG. Glycine 55 is a UMP binding site. Residues glycine 56 and arginine 60 each coordinate ATP. UMP is bound by residues aspartate 75 and 136 to 143; that span reads TGNPFFTT. ATP-binding residues include threonine 163, asparagine 164, tyrosine 169, and aspartate 172.

Belongs to the UMP kinase family. As to quaternary structure, homohexamer.

It localises to the cytoplasm. It carries out the reaction UMP + ATP = UDP + ADP. Its pathway is pyrimidine metabolism; CTP biosynthesis via de novo pathway; UDP from UMP (UMPK route): step 1/1. Its activity is regulated as follows. Inhibited by UTP. Its function is as follows. Catalyzes the reversible phosphorylation of UMP to UDP. The chain is Uridylate kinase from Neisseria meningitidis serogroup C / serotype 2a (strain ATCC 700532 / DSM 15464 / FAM18).